A 336-amino-acid polypeptide reads, in one-letter code: Cytoskeleton protein RodZ (336 aa).

Residues M1 to G111 lie on the Cytoplasmic side of the membrane. The HTH cro/C1-type domain occupies L19–L71. Residues Q30–E49 constitute a DNA-binding region (H-T-H motif). Residues W112 to W132 traverse the membrane as a helical; Signal-anchor for type II membrane protein segment. The Periplasmic portion of the chain corresponds to W133–Q336. Residues A152–S164 are compositionally biased toward low complexity. Residues A152–Q235 form a disordered region. Polar residues-rich tracts occupy residues V165–P190 and P200–V217. The span at A220 to Q235 shows a compositional bias: low complexity.

This sequence belongs to the RodZ family.

The protein localises to the cell inner membrane. Its function is as follows. Cytoskeletal protein that is involved in cell-shape control through regulation of the length of the long axis. The polypeptide is Cytoskeleton protein RodZ (Enterobacter sp. (strain 638)).